A 212-amino-acid polypeptide reads, in one-letter code: Kynurenine formamidase (212 aa).

Trp-17 is a substrate binding site. Zn(2+)-binding residues include His-48, His-52, and Asp-54. His-58 functions as the Proton donor/acceptor in the catalytic mechanism. Positions 161 and 173 each coordinate Zn(2+).

The protein belongs to the Cyclase 1 superfamily. KynB family. In terms of assembly, homodimer. Requires Zn(2+) as cofactor.

It carries out the reaction N-formyl-L-kynurenine + H2O = L-kynurenine + formate + H(+). Its pathway is amino-acid degradation; L-tryptophan degradation via kynurenine pathway; L-kynurenine from L-tryptophan: step 2/2. Functionally, catalyzes the hydrolysis of N-formyl-L-kynurenine to L-kynurenine, the second step in the kynurenine pathway of tryptophan degradation. The protein is Kynurenine formamidase of Salinibacter ruber (strain DSM 13855 / M31).